Consider the following 306-residue polypeptide: Large ribosomal subunit protein mL45 (306 aa).

The interval 287–306 (LKPEEEYEEAQGEAQKPQLA) is disordered.

It belongs to the mitochondrion-specific ribosomal protein mL45 family. Component of the mitochondrial large ribosomal subunit (mt-LSU). Mature mammalian 55S mitochondrial ribosomes consist of a small (28S) and a large (39S) subunit. The 28S small subunit contains a 12S ribosomal RNA (12S mt-rRNA) and 30 different proteins. The 39S large subunit contains a 16S rRNA (16S mt-rRNA), a copy of mitochondrial valine transfer RNA (mt-tRNA(Val)), which plays an integral structural role, and 52 different proteins.

It localises to the mitochondrion. Its function is as follows. Component of the mitochondrial large ribosomal subunit (mt-LSU). Within the mitochondrial ribosomes, required to direct the nascent polypeptide toward the tunnel exit and position the exit at a distance from the membrane surface. The polypeptide is Large ribosomal subunit protein mL45 (Homo sapiens (Human)).